We begin with the raw amino-acid sequence, 276 residues long: Large ribosomal subunit protein uL2 (276 aa).

The tract at residues 218–255 (PTVRGSAMNPCDHPHGGGEGRTPIGMSSPVTPWGKPAL) is disordered.

Belongs to the universal ribosomal protein uL2 family. In terms of assembly, part of the 50S ribosomal subunit. Forms a bridge to the 30S subunit in the 70S ribosome.

Its function is as follows. One of the primary rRNA binding proteins. Required for association of the 30S and 50S subunits to form the 70S ribosome, for tRNA binding and peptide bond formation. It has been suggested to have peptidyltransferase activity; this is somewhat controversial. Makes several contacts with the 16S rRNA in the 70S ribosome. This is Large ribosomal subunit protein uL2 from Clostridium tetani (strain Massachusetts / E88).